A 385-amino-acid chain; its full sequence is Carbamoyl phosphate synthase small chain (385 aa).

A CPSase region spans residues 1-196 (MEDALGQLAV…KLEKKKKFLF (196 aa)). Positions 51, 245, and 247 each coordinate L-glutamine. One can recognise a Glutamine amidotransferase type-1 domain in the interval 197-384 (HIVVYDFGVK…IKLLNQVKFS (188 aa)). C273 acts as the Nucleophile in catalysis. Residues L274, Q277, N315, and F318 each contribute to the L-glutamine site. Residues H357 and E359 contribute to the active site.

It belongs to the CarA family. As to quaternary structure, composed of two chains; the small (or glutamine) chain promotes the hydrolysis of glutamine to ammonia, which is used by the large (or ammonia) chain to synthesize carbamoyl phosphate. Tetramer of heterodimers (alpha,beta)4.

The catalysed reaction is hydrogencarbonate + L-glutamine + 2 ATP + H2O = carbamoyl phosphate + L-glutamate + 2 ADP + phosphate + 2 H(+). It carries out the reaction L-glutamine + H2O = L-glutamate + NH4(+). It participates in amino-acid biosynthesis; L-arginine biosynthesis; carbamoyl phosphate from bicarbonate: step 1/1. It functions in the pathway pyrimidine metabolism; UMP biosynthesis via de novo pathway; (S)-dihydroorotate from bicarbonate: step 1/3. Small subunit of the glutamine-dependent carbamoyl phosphate synthetase (CPSase). CPSase catalyzes the formation of carbamoyl phosphate from the ammonia moiety of glutamine, carbonate, and phosphate donated by ATP, constituting the first step of 2 biosynthetic pathways, one leading to arginine and/or urea and the other to pyrimidine nucleotides. The small subunit (glutamine amidotransferase) binds and cleaves glutamine to supply the large subunit with the substrate ammonia. This is Carbamoyl phosphate synthase small chain from Buchnera aphidicola subsp. Schizaphis graminum (strain Sg).